Reading from the N-terminus, the 626-residue chain is Hormonally up-regulated neu tumor-associated kinase homolog B (626 aa).

Residues Lys-1–Val-2 and Lys-17 each bind ATP. A Protein kinase domain is found at Lys-1–Leu-246. The active-site Proton acceptor is Asp-112. The segment covering Lys-336 to Glu-357 has biased composition (basic and acidic residues). 3 disordered regions span residues Lys-336–Gly-407, Val-477–Gly-574, and Gln-590–Ala-615. Positions Ser-374–Lys-390 are enriched in polar residues. Basic and acidic residues predominate over residues Pro-392–Ser-405. Positions Asp-518 to Phe-532 are enriched in polar residues. Positions Ser-539–Ser-555 are enriched in low complexity. Positions Cys-556–Ser-566 are enriched in polar residues.

Belongs to the protein kinase superfamily. CAMK Ser/Thr protein kinase family. SNF1 subfamily. In the egg, expressed predominantly in the animal hemisphere. This pattern of expression persists throughout the cleavage and blastula stages. At the gastrula stage, expression is restricted to the ectoderm. In later-stage embryos, expressed over the entire embryonic surface including the open neural plate at stage 15 and the neural tube at stage 22. In tadpoles, strongly expressed in the neural tube, motor neurons, brain regions and sensory organs (otic vesicle and eye). Also expressed in the perisomitic mesoderm, brachial arches and embryonic epidermis of tadpoles.

It catalyses the reaction L-seryl-[protein] + ATP = O-phospho-L-seryl-[protein] + ADP + H(+). It carries out the reaction L-threonyl-[protein] + ATP = O-phospho-L-threonyl-[protein] + ADP + H(+). This is Hormonally up-regulated neu tumor-associated kinase homolog B (hunk-b) from Xenopus laevis (African clawed frog).